The chain runs to 130 residues: Large ribosomal subunit protein bL12 (130 aa).

This sequence belongs to the bacterial ribosomal protein bL12 family. As to quaternary structure, homodimer. Part of the ribosomal stalk of the 50S ribosomal subunit. Forms a multimeric L10(L12)X complex, where L10 forms an elongated spine to which 2 to 4 L12 dimers bind in a sequential fashion. Binds GTP-bound translation factors.

Forms part of the ribosomal stalk which helps the ribosome interact with GTP-bound translation factors. Is thus essential for accurate translation. This Thermobifida fusca (strain YX) protein is Large ribosomal subunit protein bL12.